The sequence spans 1699 residues: DNA polymerase (1699 aa).

2 consecutive DOD-type homing endonuclease domains span residues 770 to 903 and 1222 to 1361; these read LLGY…SLGI and LIGL…LVGV.

The protein belongs to the DNA polymerase type-B family. Post-translationally, this protein undergoes a protein self splicing that involves a post-translational excision of the intervening region (intein) followed by peptide ligation.

The catalysed reaction is DNA(n) + a 2'-deoxyribonucleoside 5'-triphosphate = DNA(n+1) + diphosphate. In terms of biological role, in addition to polymerase activity, this DNA polymerase exhibits 3' to 5' exonuclease activity. Its function is as follows. PI-TspGE8I and PI-TspGE8II are endonucleases. The sequence is that of DNA polymerase (pol) from Thermococcus sp. (strain GE8).